Reading from the N-terminus, the 309-residue chain is MKKGVILINLGGPDSLEAVEPFLYNLFSDPDIFSLPFQKVLAKIIAKLRAKKTRHYYELMGGKSPQYEQTLEQAKALQERLGEDYKVVVGMRYWKPYIKDALSELLKEGINEVILLPLYPQYSKTTTGSAFNEFERSKKALKADHIKVKKIEHFYDHPLYIKAWAEQIKQSVEKPEEYHFLFSAHSLPKKLIEEGDPYQEQTEKTVKLIMENFPEVEYTLAYQSKVGFGKWLEPSTDEVIRNLIKKEVKKLLVIPISFVSEHSETLYELDKQYRELAQELGYEEFVRVPTLRTNPYFISALEDLVKNEV.

Residues His-185 and Glu-264 each contribute to the Fe cation site.

Belongs to the ferrochelatase family.

The protein resides in the cytoplasm. The enzyme catalyses heme b + 2 H(+) = protoporphyrin IX + Fe(2+). The protein operates within porphyrin-containing compound metabolism; protoheme biosynthesis; protoheme from protoporphyrin-IX: step 1/1. In terms of biological role, catalyzes the ferrous insertion into protoporphyrin IX. The protein is Ferrochelatase of Aquifex aeolicus (strain VF5).